A 100-amino-acid chain; its full sequence is Large ribosomal subunit protein bL28 (100 aa).

This sequence belongs to the bacterial ribosomal protein bL28 family.

This Ehrlichia ruminantium (strain Welgevonden) protein is Large ribosomal subunit protein bL28.